Here is a 161-residue protein sequence, read N- to C-terminus: Phosphopantetheine adenylyltransferase (161 aa).

Thr9 lines the substrate pocket. ATP is bound by residues 9-10 (TF) and His17. Substrate is bound by residues Lys41, Leu73, and Arg87. ATP contacts are provided by residues 88-90 (GLR), Glu98, and 123-129 (YSFISST).

The protein belongs to the bacterial CoaD family. In terms of assembly, homohexamer. Mg(2+) is required as a cofactor.

The protein resides in the cytoplasm. It carries out the reaction (R)-4'-phosphopantetheine + ATP + H(+) = 3'-dephospho-CoA + diphosphate. Its pathway is cofactor biosynthesis; coenzyme A biosynthesis; CoA from (R)-pantothenate: step 4/5. Reversibly transfers an adenylyl group from ATP to 4'-phosphopantetheine, yielding dephospho-CoA (dPCoA) and pyrophosphate. This chain is Phosphopantetheine adenylyltransferase, found in Pseudomonas putida (strain ATCC 47054 / DSM 6125 / CFBP 8728 / NCIMB 11950 / KT2440).